Reading from the N-terminus, the 331-residue chain is Phosphate acyltransferase (331 aa).

The protein belongs to the PlsX family. In terms of assembly, homodimer. Probably interacts with PlsY.

The protein resides in the cytoplasm. The catalysed reaction is a fatty acyl-[ACP] + phosphate = an acyl phosphate + holo-[ACP]. It functions in the pathway lipid metabolism; phospholipid metabolism. Functionally, catalyzes the reversible formation of acyl-phosphate (acyl-PO(4)) from acyl-[acyl-carrier-protein] (acyl-ACP). This enzyme utilizes acyl-ACP as fatty acyl donor, but not acyl-CoA. This is Phosphate acyltransferase from Wolinella succinogenes (strain ATCC 29543 / DSM 1740 / CCUG 13145 / JCM 31913 / LMG 7466 / NCTC 11488 / FDC 602W) (Vibrio succinogenes).